The primary structure comprises 377 residues: MLMSLTLSLQAEDGRARAATLHTAHGDVPTPTFMPVGTAATVKAMMMDSVRATGAGIVLGNTYHLMLRPGADRVAALGGLHRFMDWPGPILTDSGGFQVMSLSSLRKLDKDGVTFQSHIDGSRHRLTPESSIGIQHKLDATITMAFDECTKFPATHEEAASSMELSMRWAARCRDAFVPRDGYGLFGIVQGSVYNDLRTQSVTALGDDFHGYAVGGLAVGEGQEAMFATLDHTLPLLPRGKPRYLMGVGTPDDILGAVMRGVDMFDCVMPTRAGRTARAYTSQGVMNMRNARYADDGRPIDPACDCPACTRHSRAYLHHLFRAGEMLGPMLLTWHNLNYYQSLMRGLRSAIMEGRLEQHAVTLRAAWAAGDREKQDG.

Aspartate 93 (proton acceptor) is an active-site residue. Substrate contacts are provided by residues aspartate 93 to phenylalanine 97, aspartate 147, glutamine 190, and glycine 216. The RNA binding stretch occupies residues glycine 247 to aspartate 253. Aspartate 266 acts as the Nucleophile in catalysis. An RNA binding; important for wobble base 34 recognition region spans residues threonine 271–arginine 275. Zn(2+) contacts are provided by cysteine 304, cysteine 306, cysteine 309, and histidine 335.

This sequence belongs to the queuine tRNA-ribosyltransferase family. Homodimer. Within each dimer, one monomer is responsible for RNA recognition and catalysis, while the other monomer binds to the replacement base PreQ1. Zn(2+) is required as a cofactor.

It carries out the reaction 7-aminomethyl-7-carbaguanine + guanosine(34) in tRNA = 7-aminomethyl-7-carbaguanosine(34) in tRNA + guanine. The protein operates within tRNA modification; tRNA-queuosine biosynthesis. In terms of biological role, catalyzes the base-exchange of a guanine (G) residue with the queuine precursor 7-aminomethyl-7-deazaguanine (PreQ1) at position 34 (anticodon wobble position) in tRNAs with GU(N) anticodons (tRNA-Asp, -Asn, -His and -Tyr). Catalysis occurs through a double-displacement mechanism. The nucleophile active site attacks the C1' of nucleotide 34 to detach the guanine base from the RNA, forming a covalent enzyme-RNA intermediate. The proton acceptor active site deprotonates the incoming PreQ1, allowing a nucleophilic attack on the C1' of the ribose to form the product. After dissociation, two additional enzymatic reactions on the tRNA convert PreQ1 to queuine (Q), resulting in the hypermodified nucleoside queuosine (7-(((4,5-cis-dihydroxy-2-cyclopenten-1-yl)amino)methyl)-7-deazaguanosine). This Granulibacter bethesdensis (strain ATCC BAA-1260 / CGDNIH1) protein is Queuine tRNA-ribosyltransferase.